Reading from the N-terminus, the 243-residue chain is Derlin-1.2 (243 aa).

The Cytoplasmic portion of the chain corresponds to 1 to 20 (MSSPAEYYKSLPPISKAYGT). A helical membrane pass occupies residues 21 to 41 (LCFFTTVLVRLHILNPLFLYL). The Lumenal segment spans residues 42 to 54 (YYPRVFKKFEVWR). Residues 55–75 (IFTSFFFLGPFSINFGIRLLM) traverse the membrane as a helical segment. Topologically, residues 76–94 (IARYGVMLEKGAFDKRTAD) are cytoplasmic. A helical transmembrane segment spans residues 95 to 115 (FLWMMIFGAISLLVLSVIPQL). The Lumenal segment spans residues 116–155 (NTYVLGLPMVSMLVYVWSRENPNAQINIYGILQLKAFYLP). The helical transmembrane segment at 156–176 (WVMLLLDVIFGSPLMPGLLGI) threads the bilayer. Topologically, residues 177 to 243 (MVGHLYYYFA…FRGRSYRLNQ (67 aa)) are cytoplasmic.

This sequence belongs to the derlin family. In terms of tissue distribution, expressed in roots and endosperm.

Its subcellular location is the endoplasmic reticulum membrane. May be involved in the degradation process of specific misfolded endoplasmic reticulum (ER) luminal proteins. This Zea mays (Maize) protein is Derlin-1.2 (DER1.2).